The chain runs to 296 residues: MYFSQEEWELLDPTQKALYNDVMQENYETVISLALFVLPKPKVISCLEQGEEPWVQVSPEFKDSAGKSPTGLKLKNDTENHQPVSLSDLEIQASAGVISKKAKVKVPQKTAGKENHFDMHRVGKWHQDFPVKKRKKLSTWKQELLKLMDRHKKDCAREKPFKCQECGKTFRVSSDLIKHQRIHTEEKPYKCQQCDKRFRWSSDLNKHLTTHQGIKPYKCSWCGKSFSQNTNLHTHQRTHTGEKPFTCHECGKKFSQNSHLIKHRRTHTGEQPYTCSICRRNFSRRSSLLRHQKLHL.

The region spanning 1–66 (MYFSQEEWEL…VSPEFKDSAG (66 aa)) is the KRAB domain. C2H2-type zinc fingers lie at residues 161–183 (FKCQECGKTFRVSSDLIKHQRIH), 189–211 (YKCQQCDKRFRWSSDLNKHLTTH), 217–239 (YKCSWCGKSFSQNTNLHTHQRTH), 245–267 (FTCHECGKKFSQNSHLIKHRRTH), and 273–295 (YTCSICRRNFSRRSSLLRHQKLH).

This sequence belongs to the krueppel C2H2-type zinc-finger protein family.

The protein resides in the nucleus. May be involved in transcriptional regulation. The chain is Zinc finger protein 75A (ZNF75A) from Homo sapiens (Human).